Reading from the N-terminus, the 96-residue chain is MSRISVENVKHVAHLARLAITDQEAEKFQKQLDAIVTFAEQLNELDTTNVKPTTHVLTMRNVMREDVPEQGLPVEEVLKNAPDHKENQIRVPAVLE.

It belongs to the GatC family. As to quaternary structure, heterotrimer of A, B and C subunits.

The catalysed reaction is L-glutamyl-tRNA(Gln) + L-glutamine + ATP + H2O = L-glutaminyl-tRNA(Gln) + L-glutamate + ADP + phosphate + H(+). The enzyme catalyses L-aspartyl-tRNA(Asn) + L-glutamine + ATP + H2O = L-asparaginyl-tRNA(Asn) + L-glutamate + ADP + phosphate + 2 H(+). Its function is as follows. Allows the formation of correctly charged Asn-tRNA(Asn) or Gln-tRNA(Gln) through the transamidation of misacylated Asp-tRNA(Asn) or Glu-tRNA(Gln) in organisms which lack either or both of asparaginyl-tRNA or glutaminyl-tRNA synthetases. The reaction takes place in the presence of glutamine and ATP through an activated phospho-Asp-tRNA(Asn) or phospho-Glu-tRNA(Gln). This is Aspartyl/glutamyl-tRNA(Asn/Gln) amidotransferase subunit C from Bacillus cytotoxicus (strain DSM 22905 / CIP 110041 / 391-98 / NVH 391-98).